Reading from the N-terminus, the 415-residue chain is Probable G-protein coupled receptor 19 (415 aa).

Residues 1–69 (MVFAHRMDND…LNPGEVATAS (69 aa)) are Extracellular-facing. N25 and N52 each carry an N-linked (GlcNAc...) asparagine glycan. Residues 70–90 (IFFGALWLFSIFGNSLVCLVI) traverse the membrane as a helical segment. At 91-102 (HRSRRTQSTTNY) the chain is on the cytoplasmic side. Residues 103–123 (FVVSMACADLLISVASTPFVV) traverse the membrane as a helical segment. Residues 124-152 (LQFTTGRWTLGSAMCKVVRYFQYLTPGVQ) are Extracellular-facing. C138 and C210 are disulfide-bonded. Residues 153–173 (IYVLLSICIDRFYTIVYPLSF) form a helical membrane-spanning segment. Residues 174–182 (KVSREKAKK) lie on the Cytoplasmic side of the membrane. A helical transmembrane segment spans residues 183 to 203 (MIAASWILDAAFVTPVFFFYG). The Extracellular portion of the chain corresponds to 204-221 (SNWDSHCNYFLPPSWEGT). The chain crosses the membrane as a helical span at residues 222–242 (AYTVIHFLVGFVIPSILIILF). At 243 to 277 (YQKVIKYIWRIGTDGRTLRRTMNIVPRTKVKTVKM) the chain is on the cytoplasmic side. Residues 278–298 (FLLLNLVFLFSWLPFHVAQLW) traverse the membrane as a helical segment. At 299–309 (HPHEQDYKKSS) the chain is on the extracellular side. The helical transmembrane segment at 310–332 (LVFTAVTWVSFSSSASKPTLYSI) threads the bilayer. At 333–415 (YNANFRRGMK…INSNPPNTFV (83 aa)) the chain is on the cytoplasmic side.

This sequence belongs to the G-protein coupled receptor 1 family. Strongly expressed in the brain.

The protein resides in the cell membrane. Its function is as follows. G-protein coupled receptor that plays a role in the regulation of circadian rhythms and energy metabolism. Participates in maintaining proper circadian gene expression in the suprachiasmatic nucleus (SCN), the locus of the master circadian clock in the brain. May function as a coordinator of aging-associated metabolic dysfunction, stress response, DNA integrity management, and eventual senescence. Upon binding to adropin, modulates mitochondrial energy metabolism via the p44/42-PDK4 signaling pathway, influencing pyruvate dehydrogenase activity. This chain is Probable G-protein coupled receptor 19 (Gpr19), found in Mus musculus (Mouse).